The chain runs to 68 residues: uncharacterized protein (68 aa).

A signal peptide spans 1 to 27; sequence MKGLLCFIYILSAILIGCVFLNKDVEA.

This is an uncharacterized protein from Invertebrate iridescent virus 6 (IIV-6).